The sequence spans 2136 residues: Protein CELLULOSE SYNTHASE INTERACTIVE 3 (2136 aa).

42 ARM repeats span residues 27–66 (MEMD…LLGI), 71–111 (REAR…VLCK), 113–152 (KDLR…EVSS), 159–201 (HIGM…NLCG), 204–243 (DGYW…RLVL), 246–286 (CDSI…ALSA), 289–337 (DEAK…NVFG), 376–417 (PESS…SLYG), 419–458 (SSLS…GLCH), 461–500 (VGIW…ILTA), 503–542 (DDSK…NLCC), 545–584 (EEIR…KLVH), 586–618 (ADPA…HVLS), 619–663 (KASQ…DLFS), 666–705 (QDIC…ALSR), 711–750 (NNKK…NLLS), 752–791 (PDIA…QLLK), 811–848 (SLVD…FSYP), 849–887 (PWIA…RLCS), 936–980 (QLIT…GFLE), 1013–1041 (SVDA…YTSS), 1042–1083 (AQAE…TLAV), 1109–1149 (RGIN…SLVK), 1163–1204 (EDVR…RIAD), 1207–1247 (DTNK…VLFS), 1249–1288 (HELR…ELFD), 1290–1329 (ENIR…KLSS), 1333–1375 (SNTA…VVFS), 1377–1416 (KNIR…ILLD), 1418–1457 (EQHL…KLGK), 1460–1499 (VPRK…ILTN), 1518–1546 (AVLL…KQQT), 1547–1585 (LEAF…HFLT), 1587–1626 (EDFQ…KISA), 1628–1669 (WPKA…NILQ), 1670–1704 (YDAE…ALML), 1710–1750 (ASST…NNPR), 1790–1833 (SQHE…NFVM), 1836–1875 (RTNR…FLFS), 1921–1960 (PKLR…LLRH), 1969–2008 (VAKS…CLPG), and 2010–2035 (LTVN…QLTI). Residues 1989–2106 (KTCPPRFHDK…VTEGEYSGSL (118 aa)) form the C2 domain.

As to quaternary structure, associates with cellulase synthase (CESA) complexes. Binds to cortical microtubules. Interacts with CESA3 and CESA6. As to expression, expressed in dark-grown hypocotyls, leaves (confined to vasculature and trichomes), stamen, pollen, developing siliques, and roots. Restricted in meristematic tissue of the shoot and root. Present in distinct punctae at the cell cortex, called microtubule-associated cellulose synthase compartments, that move with constant velocities of 10 to 3000 nm/min.

The protein localises to the cell membrane. It is found in the cytoplasm. It localises to the cytoskeleton. The protein resides in the endomembrane system. Regulator of the microtubular cytoskeleton. Microtubule-associated protein involved in the association of cellulase synthase (CESA) complexes (CSCs) and cortical microtubules. Promotes dynamics of CSCs in the plasma membrane in both microtubules-dependent and microtubules-independent manners. Regulates primary cell wall biosynthesis and cellulose microfibrils organization. In Arabidopsis thaliana (Mouse-ear cress), this protein is Protein CELLULOSE SYNTHASE INTERACTIVE 3.